Reading from the N-terminus, the 277-residue chain is Protein OPG166 (277 aa).

N-linked (GlcNAc...) asparagine; by host glycans are attached at residues Asn29 and Asn58. The next 5 membrane-spanning stretches (helical) occupy residues 124–144 (TMLM…EIAY), 156–176 (GILQ…AFLF), 186–206 (IIGL…KVFS), 219–239 (LIIY…GLSL), and 247–267 (LLLS…LFLV).

The protein belongs to the orthopoxvirus OPG166 protein family.

It is found in the host membrane. Promotes, when overexpressed, the influx of extracellular Ca(2+), leading to membrane permeability and host cell necrosis. The protein is Protein OPG166 (OPG166) of Cynomys gunnisoni (Gunnison's prairie dog).